Reading from the N-terminus, the 601-residue chain is A-type ATP synthase subunit A (601 aa).

236–243 (GPFGSGKT) lines the ATP pocket.

This sequence belongs to the ATPase alpha/beta chains family. Has multiple subunits with at least A(3), B(3), C, D, E, F, H, I and proteolipid K(x).

It is found in the cell membrane. The catalysed reaction is ATP + H2O + 4 H(+)(in) = ADP + phosphate + 5 H(+)(out). In terms of biological role, component of the A-type ATP synthase that produces ATP from ADP in the presence of a proton gradient across the membrane. The A chain is the catalytic subunit. The chain is A-type ATP synthase subunit A from Hyperthermus butylicus (strain DSM 5456 / JCM 9403 / PLM1-5).